The chain runs to 308 residues: Bifunctional protein FolD (308 aa).

Residues glycine 171 to serine 173, serine 198, and isoleucine 239 contribute to the NADP(+) site.

It belongs to the tetrahydrofolate dehydrogenase/cyclohydrolase family. Homodimer.

It catalyses the reaction (6R)-5,10-methylene-5,6,7,8-tetrahydrofolate + NADP(+) = (6R)-5,10-methenyltetrahydrofolate + NADPH. The enzyme catalyses (6R)-5,10-methenyltetrahydrofolate + H2O = (6R)-10-formyltetrahydrofolate + H(+). Its pathway is one-carbon metabolism; tetrahydrofolate interconversion. Functionally, catalyzes the oxidation of 5,10-methylenetetrahydrofolate to 5,10-methenyltetrahydrofolate and then the hydrolysis of 5,10-methenyltetrahydrofolate to 10-formyltetrahydrofolate. In Borreliella burgdorferi (strain ATCC 35210 / DSM 4680 / CIP 102532 / B31) (Borrelia burgdorferi), this protein is Bifunctional protein FolD.